Reading from the N-terminus, the 229-residue chain is Potassium/proton antiporter CemA (229 aa).

Transmembrane regions (helical) follow at residues 7–27 (FTPL…SLSF), 114–134 (LICF…LLIL), 154–174 (ILLL…ELMI), and 189–209 (IISG…KYWI).

This sequence belongs to the CemA family.

Its subcellular location is the plastid. It is found in the chloroplast inner membrane. The enzyme catalyses K(+)(in) + H(+)(out) = K(+)(out) + H(+)(in). In terms of biological role, contributes to K(+)/H(+) antiport activity by supporting proton efflux to control proton extrusion and homeostasis in chloroplasts in a light-dependent manner to modulate photosynthesis. Prevents excessive induction of non-photochemical quenching (NPQ) under continuous-light conditions. Indirectly promotes efficient inorganic carbon uptake into chloroplasts. The polypeptide is Potassium/proton antiporter CemA (Gossypium hirsutum (Upland cotton)).